The sequence spans 361 residues: Lactate-binding periplasmic protein TTHA0766 (361 aa).

Residues 1-22 (MKRVSRRAFLRRLGVGVAATAA) constitute a signal peptide (tat-type signal). The substrate site is built by Y101, N158, and R178. Ca(2+) is bound at residue N158. Residues D216, F217, and Q247 each contribute to the Ca(2+) site. Residues F217 and 247–250 (QPVD) contribute to the substrate site.

It belongs to the bacterial solute-binding protein 7 family. As to quaternary structure, homodimer. The complex comprises the extracytoplasmic solute receptor protein TTHA0766, and the two putative transmembrane proteins TTHA0767 and TTHA0768.

The protein localises to the periplasm. Functionally, part of the tripartite ATP-independent periplasmic (TRAP) transport system involved in the uptake of lactate. This protein specifically binds L-lactate. The sequence is that of Lactate-binding periplasmic protein TTHA0766 from Thermus thermophilus (strain ATCC 27634 / DSM 579 / HB8).